A 374-amino-acid chain; its full sequence is N-acetyldiaminopimelate deacetylase (374 aa).

D68 is a catalytic residue. E127 (proton acceptor) is an active-site residue.

The protein belongs to the peptidase M20A family. N-acetyldiaminopimelate deacetylase subfamily.

The catalysed reaction is N-acetyl-(2S,6S)-2,6-diaminopimelate + H2O = (2S,6S)-2,6-diaminopimelate + acetate. It functions in the pathway amino-acid biosynthesis; L-lysine biosynthesis via DAP pathway; LL-2,6-diaminopimelate from (S)-tetrahydrodipicolinate (acetylase route): step 3/3. Catalyzes the conversion of N-acetyl-diaminopimelate to diaminopimelate and acetate. This is N-acetyldiaminopimelate deacetylase from Shouchella clausii (strain KSM-K16) (Alkalihalobacillus clausii).